A 462-amino-acid chain; its full sequence is Glutamate-1-semialdehyde 2,1-aminomutase (462 aa).

The segment at 178–200 (DDPQRPASPRSQSSRGLPSSPGV) is disordered. A compositionally biased stretch (low complexity) spans 182 to 192 (RPASPRSQSSR). At Lys-297 the chain carries N6-(pyridoxal phosphate)lysine.

Belongs to the class-III pyridoxal-phosphate-dependent aminotransferase family. HemL subfamily. Homodimer. The cofactor is pyridoxal 5'-phosphate.

The protein localises to the cytoplasm. The enzyme catalyses (S)-4-amino-5-oxopentanoate = 5-aminolevulinate. It participates in porphyrin-containing compound metabolism; protoporphyrin-IX biosynthesis; 5-aminolevulinate from L-glutamyl-tRNA(Glu): step 2/2. This is Glutamate-1-semialdehyde 2,1-aminomutase (hemL) from Mycobacterium bovis (strain ATCC BAA-935 / AF2122/97).